Consider the following 180-residue polypeptide: Type IV major pilin protein PilE1 (180 aa).

Positions 1–7 (MNTLQKG) are excised as a propeptide. Phenylalanine 8 carries the post-translational modification N-methylphenylalanine. A helical membrane pass occupies residues 8–28 (FTLIELMIVIAIVGILAAVAL). Serine 70 is a glycosylation site (O-linked (GlcNAc...) serine). A disulfide bond links cysteine 128 and cysteine 160.

This sequence belongs to the N-Me-Phe pilin family. In terms of assembly, the pili are polar flexible filaments of about 5.4 nanometers diameter and 2.5 micrometers average length; they consist of only a single polypeptide chain arranged in a helical configuration of five subunits per turn in the assembled pilus.

The protein localises to the fimbrium. It is found in the membrane. Major component of the type IV pilus (T4P) that plays a role in cellular adherence, microcolony formation, resistance to neutrophil mediated killing, twitching motility as well as transformation. Mediates the attachment and the formation of bacterial microcolonies on host epithelial cells. Mechanistically, pili retractation induces host NF-kappa-B activation in infected cells, which is temporally associated with the formation of gonococcal microcolonies. In Neisseria gonorrhoeae, this protein is Type IV major pilin protein PilE1 (pilE1).